The chain runs to 274 residues: NH(3)-dependent NAD(+) synthetase (274 aa).

46–53 (GISGGQDS) contributes to the ATP binding site. Asp52 contributes to the Mg(2+) binding site. Arg140 is a deamido-NAD(+) binding site. Thr160 serves as a coordination point for ATP. Glu165 is a binding site for Mg(2+). The deamido-NAD(+) site is built by Lys173 and Asp180. ATP-binding residues include Lys189 and Thr211. Position 260 to 261 (260 to 261 (HK)) interacts with deamido-NAD(+).

This sequence belongs to the NAD synthetase family. In terms of assembly, homodimer.

The enzyme catalyses deamido-NAD(+) + NH4(+) + ATP = AMP + diphosphate + NAD(+) + H(+). Its pathway is cofactor biosynthesis; NAD(+) biosynthesis; NAD(+) from deamido-NAD(+) (ammonia route): step 1/1. Its function is as follows. Catalyzes the ATP-dependent amidation of deamido-NAD to form NAD. Uses ammonia as a nitrogen source. The sequence is that of NH(3)-dependent NAD(+) synthetase from Lactococcus lactis subsp. cremoris (strain MG1363).